The chain runs to 398 residues: Chorismate synthase (398 aa).

The NADP(+) site is built by Arg-44 and Arg-50. Residues 133–135 (RAS), 261–262 (QA), Gly-306, 321–325 (KPIPT), and Arg-347 contribute to the FMN site.

It belongs to the chorismate synthase family. In terms of assembly, homotetramer. It depends on FMNH2 as a cofactor.

The catalysed reaction is 5-O-(1-carboxyvinyl)-3-phosphoshikimate = chorismate + phosphate. It functions in the pathway metabolic intermediate biosynthesis; chorismate biosynthesis; chorismate from D-erythrose 4-phosphate and phosphoenolpyruvate: step 7/7. Its function is as follows. Catalyzes the anti-1,4-elimination of the C-3 phosphate and the C-6 proR hydrogen from 5-enolpyruvylshikimate-3-phosphate (EPSP) to yield chorismate, which is the branch point compound that serves as the starting substrate for the three terminal pathways of aromatic amino acid biosynthesis. This reaction introduces a second double bond into the aromatic ring system. The polypeptide is Chorismate synthase (Aquifex aeolicus (strain VF5)).